Consider the following 276-residue polypeptide: CASP-like protein 4A3 (276 aa).

Polar residues predominate over residues 1–13 (MPSMSPSSISTEK). A disordered region spans residues 1–76 (MPSMSPSSIS…PVKIEETPSP (76 aa)). Residues 1 to 126 (MPSMSPSSIS…RRSRREEIVK (126 aa)) are Cytoplasmic-facing. Residues 43 to 72 (SLDHSSDSEKEDEKRRPESRRNKNPVKIEE) are compositionally biased toward basic and acidic residues. A helical transmembrane segment spans residues 127 to 147 (FVALGFRLSEVVLALISFSIM). Residues 148–167 (AADKTKGWSGDSFDRYKEYR) lie on the Extracellular side of the membrane. The helical transmembrane segment at 168–188 (FCLSVNVVAFIYASFQACDLA) threads the bilayer. Residues 189-205 (YHLVKEKHLISHHLRPL) lie on the Cytoplasmic side of the membrane. The chain crosses the membrane as a helical span at residues 206–226 (FEFIIDQVLAYLLMCASTAAV). Residues 227–244 (TRVDDWVSNWGKDDFTEM) are Extracellular-facing. A helical membrane pass occupies residues 245 to 265 (ASASIAMSFLTFLAFAFSSLI). Topologically, residues 266–276 (SGYNLFNQDSL) are cytoplasmic.

The protein belongs to the Casparian strip membrane proteins (CASP) family. Homodimer and heterodimers.

The protein resides in the cell membrane. This chain is CASP-like protein 4A3, found in Arabidopsis lyrata subsp. lyrata (Lyre-leaved rock-cress).